Reading from the N-terminus, the 182-residue chain is Protein Syd (182 aa).

Belongs to the Syd family.

The protein localises to the cell inner membrane. In terms of biological role, interacts with the SecY protein in vivo. May bind preferentially to an uncomplexed state of SecY, thus functioning either as a chelating agent for excess SecY in the cell or as a regulatory factor that negatively controls the translocase function. This chain is Protein Syd, found in Pectobacterium carotovorum subsp. carotovorum (strain PC1).